A 470-amino-acid polypeptide reads, in one-letter code: 3-isopropylmalate dehydratase large subunit (470 aa).

The [4Fe-4S] cluster site is built by C347, C407, and C410.

Belongs to the aconitase/IPM isomerase family. LeuC type 1 subfamily. Heterodimer of LeuC and LeuD. The cofactor is [4Fe-4S] cluster.

The catalysed reaction is (2R,3S)-3-isopropylmalate = (2S)-2-isopropylmalate. The protein operates within amino-acid biosynthesis; L-leucine biosynthesis; L-leucine from 3-methyl-2-oxobutanoate: step 2/4. Catalyzes the isomerization between 2-isopropylmalate and 3-isopropylmalate, via the formation of 2-isopropylmaleate. The sequence is that of 3-isopropylmalate dehydratase large subunit from Shewanella amazonensis (strain ATCC BAA-1098 / SB2B).